The primary structure comprises 572 residues: Urease subunit alpha (572 aa).

3 residues coordinate Ni(2+): histidine 139, histidine 141, and lysine 222. The residue at position 222 (lysine 222) is an N6-carboxylysine. Histidine 224 provides a ligand contact to substrate. Positions 251 and 277 each coordinate Ni(2+). The active-site Proton donor is the histidine 325. Aspartate 365 contacts Ni(2+).

Belongs to the metallo-dependent hydrolases superfamily. Urease alpha subunit family. As to quaternary structure, heterotrimer of UreA (gamma), UreB (beta) and UreC (alpha) subunits. Three heterotrimers associate to form the active enzyme. It depends on Ni cation as a cofactor. Carboxylation allows a single lysine to coordinate two nickel ions.

It localises to the cytoplasm. The enzyme catalyses urea + 2 H2O + H(+) = hydrogencarbonate + 2 NH4(+). Its pathway is nitrogen metabolism; urea degradation; CO(2) and NH(3) from urea (urease route): step 1/1. The polypeptide is Urease subunit alpha (Acetivibrio thermocellus (strain ATCC 27405 / DSM 1237 / JCM 9322 / NBRC 103400 / NCIMB 10682 / NRRL B-4536 / VPI 7372) (Clostridium thermocellum)).